The following is a 277-amino-acid chain: MNDAIHVQGLNKTFSHKSALVDLALSIQPGEMVALIGASGSGKSTLLRHLAGLACCDRSNGGQVQVLGREVQSSGRLNSQVRRLRADIGYIFQQFNLVNRLSVLDNVLLGCLGRMPRWRGSLALFNREEKQRAMAALDRVGLADLATQRASTLSGGQQQRVAIARALTQRAEVILADEPIASLDPESARRVMEILADINRSDGKTVVVTLHQVDYAVRYCPRAVALKGGRIHFDGLAQDLSKQFLNDLYGADADASLMITERSRRVRQKPRLELAKV.

An ABC transporter domain is found at 5–253 (IHVQGLNKTF…FLNDLYGADA (249 aa)). 37-44 (GASGSGKS) is an ATP binding site.

Belongs to the ABC transporter superfamily. Phosphonates importer (TC 3.A.1.9.1) family. In terms of assembly, the complex is composed of two ATP-binding proteins (PhnC), two transmembrane proteins (PhnE) and a solute-binding protein (PhnD).

It localises to the cell inner membrane. The catalysed reaction is phosphonate(out) + ATP + H2O = phosphonate(in) + ADP + phosphate + H(+). Its function is as follows. Part of the ABC transporter complex PhnCDE involved in phosphonates import. Responsible for energy coupling to the transport system. This is Phosphonates import ATP-binding protein PhnC 2 from Pseudomonas savastanoi pv. phaseolicola (strain 1448A / Race 6) (Pseudomonas syringae pv. phaseolicola (strain 1448A / Race 6)).